A 169-amino-acid chain; its full sequence is MIVITTRTGAMTGFPLSRHDIRIALHSMLSCLGLSGAHVEVILTDDGESAQLNREFLGCYGPTNILSFPAAGPVAAPRQEPDSPPACRKDSSHAEDDTDLGVLALSTGAVHRESFLYGQPPHRHALRLLAHGLLHLAGYDHGPQMDDMTETLMQCATGKAAADTVVTGF.

Residues 72 to 95 (GPVAAPRQEPDSPPACRKDSSHAE) are disordered. Residues histidine 131, histidine 135, and histidine 141 each contribute to the Zn(2+) site.

The protein belongs to the endoribonuclease YbeY family. The cofactor is Zn(2+).

Its subcellular location is the cytoplasm. In terms of biological role, single strand-specific metallo-endoribonuclease involved in late-stage 70S ribosome quality control and in maturation of the 3' terminus of the 16S rRNA. This chain is Endoribonuclease YbeY, found in Oleidesulfovibrio alaskensis (strain ATCC BAA-1058 / DSM 17464 / G20) (Desulfovibrio alaskensis).